The following is a 744-amino-acid chain: Polyadenylate-binding protein, cytoplasmic and nuclear (744 aa).

The segment covering Met-1–Val-11 has biased composition (polar residues). The interval Met-1 to Gln-42 is disordered. The segment covering Ala-33 to Gln-42 has biased composition (low complexity). 4 RRM domains span residues Ala-48–Arg-126, Gly-136–Pro-213, Thr-229–Lys-306, and Val-332–Arg-462. Disordered regions lie at residues Glu-368–Lys-411, Gly-527–Gln-550, Ile-607–Asp-651, and Val-723–Ala-744. A compositionally biased stretch (basic and acidic residues) spans Lys-376–Ser-397. Composition is skewed to gly residues over residues Gly-527 to Gly-545, Gly-609 to Gly-632, and Pro-640 to Gly-649. Residues Gly-647–Lys-724 form the PABC domain.

The protein belongs to the polyadenylate-binding protein type-1 family.

It is found in the cytoplasm. The protein localises to the nucleus. In terms of biological role, binds the poly(A) tail of mRNA. Appears to be an important mediator of the multiple roles of the poly(A) tail in mRNA biogenesis, stability and translation. In the nucleus, involved in both mRNA cleavage and polyadenylation. Is also required for efficient mRNA export to the cytoplasm. Acts in concert with a poly(A)-specific nuclease (PAN) to affect poly(A) tail shortening, which may occur concomitantly with either nucleocytoplasmic mRNA transport or translational initiation. In the cytoplasm, stimulates translation initiation and regulates mRNA decay through translation termination-coupled poly(A) shortening, probably mediated by PAN. This Phaeosphaeria nodorum (strain SN15 / ATCC MYA-4574 / FGSC 10173) (Glume blotch fungus) protein is Polyadenylate-binding protein, cytoplasmic and nuclear (PAB1).